Consider the following 197-residue polypeptide: Phosphoheptose isomerase (197 aa).

Residues 37 to 197 (MLQCLMNDGK…CIDSVLLEGM (161 aa)) enclose the SIS domain. 52-54 (NGG) contacts substrate. 2 residues coordinate Zn(2+): histidine 61 and glutamate 65. Residues glutamate 65, 94–95 (ND), 120–122 (STS), serine 125, and glutamine 175 each bind substrate. Residues glutamine 175 and histidine 183 each contribute to the Zn(2+) site.

This sequence belongs to the SIS family. GmhA subfamily. In terms of assembly, homotetramer. Zn(2+) is required as a cofactor.

It localises to the cytoplasm. The enzyme catalyses 2 D-sedoheptulose 7-phosphate = D-glycero-alpha-D-manno-heptose 7-phosphate + D-glycero-beta-D-manno-heptose 7-phosphate. Its pathway is carbohydrate biosynthesis; D-glycero-D-manno-heptose 7-phosphate biosynthesis; D-glycero-alpha-D-manno-heptose 7-phosphate and D-glycero-beta-D-manno-heptose 7-phosphate from sedoheptulose 7-phosphate: step 1/1. Its function is as follows. Catalyzes the isomerization of sedoheptulose 7-phosphate in D-glycero-D-manno-heptose 7-phosphate. The polypeptide is Phosphoheptose isomerase (Neisseria meningitidis serogroup C (strain 053442)).